The primary structure comprises 434 residues: Protein ENHANCED PSEUDOMONAS SUSCEPTIBILITY 1 (434 aa).

Catalysis depends on Asp376, which acts as the Proton acceptor.

It belongs to the plant acyltransferase family.

Functionally, required for pathogen-induced salicylic acid (SA) accumulation and SA-mediated resistance to virulent and avirulent pathogens (e.g. P.syringae). The sequence is that of Protein ENHANCED PSEUDOMONAS SUSCEPTIBILITY 1 from Arabidopsis thaliana (Mouse-ear cress).